The chain runs to 545 residues: MAKEIIFADDARNRLYSGVKKLNDAVKVTMGPRGRNVLIQKSFGAPSITKDGVSVAKEIELKDTIENMGAGLVREVASKTNDEAGDGTTTATVLAHAIFKEGLRNITAGANPIEVKRGMDKFVEAVTSELKSAAKKVDGKKEIAQVATISANSDSSIGDLIAEAMEKVGKDGVITVEEAKSINDELNVVEGMQFDRGYLSPYFITNAEKMQVELSSPFILLFDKKITNLKDLLPVLEQIQKTGKPLLIVAEDIEGEALATLVVNKLRGVLNISAVKAPGFGDRRKAMLEDIAILTGGEVISEELGRTLESASLQDLGQADRVVIDKDNTTIVNGAGDKDSIEARINQIKAQIAETTSDYDKEKLQERLAKLSGGVAVIKVGAATETEMKEKKDRVDDALNATKAAVEEGIVVGGGAALIKAGNRVNLSLKGDELIGAEIVKRALFAPLRQIAENAGFDAGVVANSVSCADCPNYGFNAASGEYVDMFEAGIIDPVKVERIALQNAVSVASLLLTTEATVSEIKEDKPAMPPMPDMGGMGGMGGMM.

ATP contacts are provided by residues 29-32 (TMGP), lysine 50, 86-90 (DGTTT), glycine 414, 477-479 (NAA), and aspartate 493.

It belongs to the chaperonin (HSP60) family. Forms a cylinder of 14 subunits composed of two heptameric rings stacked back-to-back. Interacts with the co-chaperonin GroES.

The protein resides in the cytoplasm. It catalyses the reaction ATP + H2O + a folded polypeptide = ADP + phosphate + an unfolded polypeptide.. Together with its co-chaperonin GroES, plays an essential role in assisting protein folding. The GroEL-GroES system forms a nano-cage that allows encapsulation of the non-native substrate proteins and provides a physical environment optimized to promote and accelerate protein folding. In Campylobacter fetus subsp. fetus (strain 82-40), this protein is Chaperonin GroEL.